We begin with the raw amino-acid sequence, 525 residues long: Endoglucanase 10 (525 aa).

The first 26 residues, 1–26 (MEEKSKSRGWCGWFIAIIVLASVILA), serve as a signal peptide directing secretion. The active-site Nucleophile is the D109. An N-linked (GlcNAc...) asparagine glycan is attached at N259. Residue H442 is part of the active site. N-linked (GlcNAc...) asparagine glycans are attached at residues N464 and N484. Catalysis depends on residues D489 and E498.

The protein belongs to the glycosyl hydrolase 9 (cellulase E) family.

It is found in the secreted. It catalyses the reaction Endohydrolysis of (1-&gt;4)-beta-D-glucosidic linkages in cellulose, lichenin and cereal beta-D-glucans.. The sequence is that of Endoglucanase 10 from Arabidopsis thaliana (Mouse-ear cress).